The primary structure comprises 72 residues: uncharacterized protein (72 aa).

Residues 1–22 (MQSNFIFATLLVLLSLLTFTYA) form the signal peptide. Over 23-28 (SGSSSM) the chain is Extracellular. Residues 29 to 49 (TSSSMPMFGGAIVAAFAFAIF) traverse the membrane as a helical segment. At 50–72 (SRLAQNFAPRAIFSLLPYHSVSC) the chain is on the cytoplasmic side.

The protein localises to the membrane. This is an uncharacterized protein from Dictyostelium discoideum (Social amoeba).